Consider the following 115-residue polypeptide: NADH-ubiquinone oxidoreductase chain 3 (115 aa).

3 consecutive transmembrane segments (helical) span residues 4–24 (LLTM…AFWL), 55–75 (FFLV…LLPI), and 84–104 (INTM…GLAY).

This sequence belongs to the complex I subunit 3 family. As to quaternary structure, core subunit of respiratory chain NADH dehydrogenase (Complex I) which is composed of 45 different subunits. Interacts with TMEM186. Interacts with TMEM242.

It is found in the mitochondrion inner membrane. It catalyses the reaction a ubiquinone + NADH + 5 H(+)(in) = a ubiquinol + NAD(+) + 4 H(+)(out). Its function is as follows. Core subunit of the mitochondrial membrane respiratory chain NADH dehydrogenase (Complex I) which catalyzes electron transfer from NADH through the respiratory chain, using ubiquinone as an electron acceptor. Essential for the catalytic activity of complex I. In Neotoma lepida (Desert woodrat), this protein is NADH-ubiquinone oxidoreductase chain 3.